Consider the following 186-residue polypeptide: Interferon beta-3 (186 aa).

The first 21 residues, M1–S21, serve as a signal peptide directing secretion. C52 and C161 are oxidised to a cystine. N-linked (GlcNAc...) asparagine glycans are attached at residues N131 and N173.

This sequence belongs to the alpha/beta interferon family. In terms of assembly, monomer.

The protein resides in the secreted. Its function is as follows. Has antiviral, antibacterial and anticancer activities. This Bos taurus (Bovine) protein is Interferon beta-3 (IFNB3).